Reading from the N-terminus, the 116-residue chain is uncharacterized protein (116 aa).

This is an uncharacterized protein from Acidianus filamentous virus 2 (isolate Italy/Pozzuoli) (AFV-2).